Here is a 369-residue protein sequence, read N- to C-terminus: Putative gustatory receptor 39b (369 aa).

At 1-32 the chain is on the cytoplasmic side; sequence MLYSFHPYLKYFALLGLVPWSESCAQSKFVQK. The chain crosses the membrane as a helical span at residues 33-53; sequence VYSAILIILNAVHFGISIYFP. Topologically, residues 54 to 59 are extracellular; sequence QSAELF. A helical transmembrane segment spans residues 60–80; the sequence is LSLMVNVIVFVARIVCVTVII. Residues 81–122 lie on the Cytoplasmic side of the membrane; the sequence is LQVMVHYDDYFRFCREMKYLGLRLQCELKIHVGRLKWQSYAK. Residues 123-143 form a helical membrane-spanning segment; that stretch reads ILALGIGFLVTVLPSIYVALS. The Extracellular segment spans residues 144–147; the sequence is GSLL. The chain crosses the membrane as a helical span at residues 148-168; it reads YFWSSLLSILIIRMQFVLVLL. Over 169–224 the chain is Cytoplasmic; the sequence is NVELLGHHVSLLGIRLQNVLECHLMGANCTLDGNANRLCSLEFLLALKQSHMQLHY. The chain crosses the membrane as a helical span at residues 225-245; sequence LFTHFNDLFGWSILGTYVVLF. Topologically, residues 246 to 265 are extracellular; the sequence is SDSTVNIYWTQQVLVEVYEY. Residues 266–286 form a helical membrane-spanning segment; sequence KYLYATFSVFVPSFFNILVFC. The Cytoplasmic portion of the chain corresponds to 287–348; sequence RCGEFCQRQS…EGFMSTDNSL (62 aa). A helical membrane pass occupies residues 349–368; the sequence is LMSILAAKVTYLIVLMQFSS. Residue valine 369 is a topological domain, extracellular.

It belongs to the insect chemoreceptor superfamily. Gustatory receptor (GR) family. Gr2a subfamily. In terms of tissue distribution, expressed in the adult labellar chemosensory neurons and in abdominal ganglions. In larvae, is expressed in neurons of the dorsal and posterior pharyngeal sense organs.

The protein resides in the cell membrane. Probable gustatory receptor which mediates acceptance or avoidance behavior, depending on its substrates. Has also atypical sensory function in organ not limited to conventional taste sensing like abdominal ganglions. In Drosophila melanogaster (Fruit fly), this protein is Putative gustatory receptor 39b (Gr39b).